Consider the following 259-residue polypeptide: Undecaprenyl-diphosphatase 4 (259 aa).

A run of 8 helical transmembrane segments spans residues 1–21 (MNWLEAFILGIIQGLTEFLPI), 39–59 (AGLFLDTMLHIGTLLAVFIYY), 71–91 (FSKLMLLLIVGTIPAVVIGLL), 99–119 (ISKTGITIGWEFLVTGFFLYM), 133–153 (ITYKDAFIIGSFQAAAIFPAI), 173–193 (AAYFSFLLSTPAIVGAIILQF), 208–228 (SLIVGTLSAAFFGYIAVSWMI), and 239–259 (FAYYVWGLGIIIITLQYTHVF).

This sequence belongs to the UppP family.

The protein localises to the cell membrane. It carries out the reaction di-trans,octa-cis-undecaprenyl diphosphate + H2O = di-trans,octa-cis-undecaprenyl phosphate + phosphate + H(+). Functionally, catalyzes the dephosphorylation of undecaprenyl diphosphate (UPP). Confers resistance to bacitracin. This is Undecaprenyl-diphosphatase 4 from Bacillus thuringiensis (strain Al Hakam).